Here is an 87-residue protein sequence, read N- to C-terminus: UPF0367 protein SynWH7803_2240 (87 aa).

Belongs to the UPF0367 family.

The sequence is that of UPF0367 protein SynWH7803_2240 from Synechococcus sp. (strain WH7803).